Here is a 347-residue protein sequence, read N- to C-terminus: Protein RecA (347 aa).

67–74 (GPESSGKT) provides a ligand contact to ATP. The disordered stretch occupies residues 326–347 (DKLLPGRAPSSEAQGTESGQEA). Residues 336-347 (SEAQGTESGQEA) show a composition bias toward polar residues.

It belongs to the RecA family.

It is found in the cytoplasm. Can catalyze the hydrolysis of ATP in the presence of single-stranded DNA, the ATP-dependent uptake of single-stranded DNA by duplex DNA, and the ATP-dependent hybridization of homologous single-stranded DNAs. It interacts with LexA causing its activation and leading to its autocatalytic cleavage. The polypeptide is Protein RecA (Alkalilimnicola ehrlichii (strain ATCC BAA-1101 / DSM 17681 / MLHE-1)).